The following is a 432-amino-acid chain: UDP-N-acetylmuramoylalanine--D-glutamate ligase (432 aa).

Position 98–104 (98–104 (GTNGKST)) interacts with ATP.

It belongs to the MurCDEF family.

Its subcellular location is the cytoplasm. The enzyme catalyses UDP-N-acetyl-alpha-D-muramoyl-L-alanine + D-glutamate + ATP = UDP-N-acetyl-alpha-D-muramoyl-L-alanyl-D-glutamate + ADP + phosphate + H(+). Its pathway is cell wall biogenesis; peptidoglycan biosynthesis. Functionally, cell wall formation. Catalyzes the addition of glutamate to the nucleotide precursor UDP-N-acetylmuramoyl-L-alanine (UMA). This is UDP-N-acetylmuramoylalanine--D-glutamate ligase from Fusobacterium nucleatum subsp. nucleatum (strain ATCC 25586 / DSM 15643 / BCRC 10681 / CIP 101130 / JCM 8532 / KCTC 2640 / LMG 13131 / VPI 4355).